A 366-amino-acid polypeptide reads, in one-letter code: Chorismate synthase (366 aa).

Residues Arg48 and Arg54 each contribute to the NADP(+) site. FMN contacts are provided by residues 125–127 (RSS), 237–238 (NA), Gly277, 292–296 (KPTSS), and Arg318.

The protein belongs to the chorismate synthase family. Homotetramer. It depends on FMNH2 as a cofactor.

The enzyme catalyses 5-O-(1-carboxyvinyl)-3-phosphoshikimate = chorismate + phosphate. Its pathway is metabolic intermediate biosynthesis; chorismate biosynthesis; chorismate from D-erythrose 4-phosphate and phosphoenolpyruvate: step 7/7. Its function is as follows. Catalyzes the anti-1,4-elimination of the C-3 phosphate and the C-6 proR hydrogen from 5-enolpyruvylshikimate-3-phosphate (EPSP) to yield chorismate, which is the branch point compound that serves as the starting substrate for the three terminal pathways of aromatic amino acid biosynthesis. This reaction introduces a second double bond into the aromatic ring system. This Acidovorax sp. (strain JS42) protein is Chorismate synthase.